A 203-amino-acid polypeptide reads, in one-letter code: Enterotoxin-like toxin X (203 aa).

It belongs to the staphylococcal/streptococcal toxin family.

It is found in the secreted. In terms of biological role, plays a role in the inhibition of the host innate immune system. Inhibits phagocytosis and killing by human neutrophils by interacting with multiple neutrophil surface glycoproteins in a sialic acid-dependent manner. This Staphylococcus aureus (strain NCTC 8325 / PS 47) protein is Enterotoxin-like toxin X.